The primary structure comprises 142 residues: Protein archease (142 aa).

Positions 12, 141, and 142 each coordinate Ca(2+).

It belongs to the archease family.

In terms of biological role, activates the tRNA-splicing ligase complex by facilitating the enzymatic turnover of catalytic subunit RtcB. Acts by promoting the guanylylation of RtcB, a key intermediate step in tRNA ligation. Can also alter the NTP specificity of RtcB such that ATP, dGTP or ITP is used efficiently. This chain is Protein archease, found in Thermococcus gammatolerans (strain DSM 15229 / JCM 11827 / EJ3).